A 275-amino-acid polypeptide reads, in one-letter code: Ribosomal RNA small subunit methyltransferase A (275 aa).

N19, L21, G46, E71, D94, and N117 together coordinate S-adenosyl-L-methionine.

Belongs to the class I-like SAM-binding methyltransferase superfamily. rRNA adenine N(6)-methyltransferase family. RsmA subfamily.

The protein resides in the cytoplasm. It catalyses the reaction adenosine(1518)/adenosine(1519) in 16S rRNA + 4 S-adenosyl-L-methionine = N(6)-dimethyladenosine(1518)/N(6)-dimethyladenosine(1519) in 16S rRNA + 4 S-adenosyl-L-homocysteine + 4 H(+). In terms of biological role, specifically dimethylates two adjacent adenosines (A1518 and A1519) in the loop of a conserved hairpin near the 3'-end of 16S rRNA in the 30S particle. May play a critical role in biogenesis of 30S subunits. The polypeptide is Ribosomal RNA small subunit methyltransferase A (Burkholderia lata (strain ATCC 17760 / DSM 23089 / LMG 22485 / NCIMB 9086 / R18194 / 383)).